The chain runs to 408 residues: LL-diaminopimelate aminotransferase (408 aa).

2 residues coordinate substrate: Tyr15 and Gly42. Pyridoxal 5'-phosphate is bound by residues Tyr72, 108 to 109 (SK), Tyr132, Asn187, Tyr218, and 246 to 248 (SFS). Residues Lys109, Tyr132, and Asn187 each coordinate substrate. N6-(pyridoxal phosphate)lysine is present on Lys249. Residues Arg257 and Asn292 each contribute to the pyridoxal 5'-phosphate site. Substrate is bound by residues Asn292 and Arg388.

Belongs to the class-I pyridoxal-phosphate-dependent aminotransferase family. LL-diaminopimelate aminotransferase subfamily. In terms of assembly, homodimer. Pyridoxal 5'-phosphate is required as a cofactor.

It carries out the reaction (2S,6S)-2,6-diaminopimelate + 2-oxoglutarate = (S)-2,3,4,5-tetrahydrodipicolinate + L-glutamate + H2O + H(+). The protein operates within amino-acid biosynthesis; L-lysine biosynthesis via DAP pathway; LL-2,6-diaminopimelate from (S)-tetrahydrodipicolinate (aminotransferase route): step 1/1. Its function is as follows. Involved in the synthesis of meso-diaminopimelate (m-DAP or DL-DAP), required for both lysine and peptidoglycan biosynthesis. Catalyzes the direct conversion of tetrahydrodipicolinate to LL-diaminopimelate. The sequence is that of LL-diaminopimelate aminotransferase from Prochlorococcus marinus (strain MIT 9303).